The following is a 335-amino-acid chain: Cholinephosphotransferase 1 (335 aa).

2 helical membrane passes run 53-73 (PNAITLGGLLLNCLTALPLIA) and 84-108 (FWAYILGALGLFIYQSLDAIDGKQA). N54 serves as a coordination point for CDP-choline. Mg(2+) contacts are provided by D101 and D104. R109 lines the CDP-choline pocket. The next 6 helical transmembrane spans lie at 116-140 (PLGELFDHGCDSISTVFVVLGSCIA), 151-169 (FFCCFVGLFMFYSAHWQTY), 181-197 (VTEVQIAITMLLLVSAF), 213-238 (ELKFFAVVGILCGTAVSCFNYFRIIF), 267-276 (IGPGLLFLDQ), and 284-313 (EYVVLWIALFISLFDMLRYATGVCLQIAAH). Residue D122 participates in Mg(2+) binding. The Proton acceptor role is filled by H123. D126 serves as a coordination point for Mg(2+).

The protein belongs to the CDP-alcohol phosphatidyltransferase class-I family. The cofactor is Mg(2+). It depends on Mn(2+) as a cofactor.

It is found in the golgi apparatus membrane. It carries out the reaction CDP-choline + a 1,2-diacyl-sn-glycerol = a 1,2-diacyl-sn-glycero-3-phosphocholine + CMP + H(+). The enzyme catalyses 1-octadecanoyl-2-(5Z,8Z,11Z,14Z-eicosatetraenoyl)-sn-glycerol + CDP-choline = 1-octadecanoyl-2-(5Z,8Z,11Z,14Z-eicosatetraenoyl)-sn-glycero-3-phosphocholine + CMP + H(+). It catalyses the reaction 1-hexadecanoyl-2-(9Z-octadecenoyl)-sn-glycerol + CDP-choline = 1-hexadecanoyl-2-(9Z-octadecenoyl)-sn-glycero-3-phosphocholine + CMP + H(+). The catalysed reaction is 1-hexadecanoyl-2-(4Z,7Z,10Z,13Z,16Z,19Z-docosahexaenoyl)-sn-glycerol + CDP-choline = 1-hexadecanoyl-2-(4Z,7Z,10Z,13Z,16Z,19Z-docosahexaenoyl)-sn-glycero-3-phosphocholine + CMP + H(+). It carries out the reaction 1,2-dioctanoyl-sn-glycerol + CDP-choline = 1,2-dioctanoyl-sn-glycero-3-phosphocholine + CMP + H(+). It functions in the pathway phospholipid metabolism; phosphatidylcholine biosynthesis; phosphatidylcholine from phosphocholine: step 2/2. Its function is as follows. Catalyzes the final step of de novo phosphatidylcholine (PC) synthesis, i.e. the transfer of choline phosphate from CDP-choline to the free hydroxyl of a diacylglycerol (DAG), producing a PC. It thereby plays a central role in the formation and maintenance of vesicular membranes. The chain is Cholinephosphotransferase 1 (CHPT1) from Gallus gallus (Chicken).